We begin with the raw amino-acid sequence, 937 residues long: Translation initiation factor IF-2 (937 aa).

A disordered region spans residues 47 to 352 (RAAFQTKATP…EMPQRKERPL (306 aa)). A compositionally biased stretch (low complexity) spans 52–68 (TKATPAASKPATPAAPK). Residues 97–116 (QHSNNRPQANANRNGQASNG) are compositionally biased toward polar residues. Positions 117 to 153 (QNRTNNARPNNNSARPNNSRPNTNSRPNNNSQNRSTS) are enriched in low complexity. Residues 154-169 (ANHPMSLQEQISQANA) show a composition bias toward polar residues. Basic and acidic residues predominate over residues 173-197 (RTQERIQQQREQREADEKKRREQAN). Polar residues predominate over residues 202–229 (TRNNASNNRPSNGKPTNGARPTTNSPRP). Residues 240-269 (SSRPNNNNSARPNTTNNRPTNSRPATTPSR) are compositionally biased toward low complexity. The segment covering 274–298 (QEMQQKMQANTVSASKPASNNTASK) has biased composition (polar residues). The segment covering 322–331 (FNKKRKKTRK) has biased composition (basic residues). A compositionally biased stretch (basic and acidic residues) spans 339–352 (AAKKEMPQRKERPL). Residues 438–607 (SRPPVVTIMG…LLEADVLELK (170 aa)) enclose the tr-type G domain. Residues 447–454 (GHVDHGKT) are G1. 447 to 454 (GHVDHGKT) lines the GTP pocket. The G2 stretch occupies residues 472–476 (GITQH). Positions 493 to 496 (DTPG) are G3. GTP-binding positions include 493–497 (DTPGH) and 547–550 (NKID). The G4 stretch occupies residues 547–550 (NKID). Positions 583–585 (SAK) are G5.

The protein belongs to the TRAFAC class translation factor GTPase superfamily. Classic translation factor GTPase family. IF-2 subfamily.

The protein localises to the cytoplasm. Its function is as follows. One of the essential components for the initiation of protein synthesis. Protects formylmethionyl-tRNA from spontaneous hydrolysis and promotes its binding to the 30S ribosomal subunits. Also involved in the hydrolysis of GTP during the formation of the 70S ribosomal complex. The chain is Translation initiation factor IF-2 from Latilactobacillus sakei subsp. sakei (strain 23K) (Lactobacillus sakei subsp. sakei).